Reading from the N-terminus, the 439-residue chain is Oxysterol-binding protein 6 (439 aa).

Disordered regions lie at residues 1-40 (MSAKVASNKEAPLTEDSVSDLSSDGVEAEGVDQTENSGAD) and 409-439 (ESSTPNLSKVDSSAKIENSIPVDNSIPQTTN). Polar residues-rich tracts occupy residues 409–419 (ESSTPNLSKVD) and 429–439 (PVDNSIPQTTN).

The protein belongs to the OSBP family.

The chain is Oxysterol-binding protein 6 (osbF) from Dictyostelium discoideum (Social amoeba).